Reading from the N-terminus, the 871-residue chain is DNA mismatch repair protein MutS (871 aa).

605 to 612 (GPNMGGKS) lines the ATP pocket. The disordered stretch occupies residues 791–840 (PQRPTSASVEQPVDSAKTETAATAEEPQQLSLFPTDEETKPKQPTKKERS). The span at 827 to 840 (EETKPKQPTKKERS) shows a compositional bias: basic and acidic residues.

This sequence belongs to the DNA mismatch repair MutS family.

Functionally, this protein is involved in the repair of mismatches in DNA. It is possible that it carries out the mismatch recognition step. This protein has a weak ATPase activity. The chain is DNA mismatch repair protein MutS from Shouchella clausii (strain KSM-K16) (Alkalihalobacillus clausii).